The sequence spans 726 residues: Catalase-peroxidase (726 aa).

Residues Trp85–Tyr208 constitute a cross-link (tryptophyl-tyrosyl-methioninium (Trp-Tyr) (with M-234)). The Proton acceptor role is filled by His86. A cross-link (tryptophyl-tyrosyl-methioninium (Tyr-Met) (with W-85)) is located at residues Tyr208–Met234. Residue His249 coordinates heme b.

Belongs to the peroxidase family. Peroxidase/catalase subfamily. As to quaternary structure, homodimer or homotetramer. Requires heme b as cofactor. Formation of the three residue Trp-Tyr-Met cross-link is important for the catalase, but not the peroxidase activity of the enzyme.

It catalyses the reaction H2O2 + AH2 = A + 2 H2O. The enzyme catalyses 2 H2O2 = O2 + 2 H2O. In terms of biological role, bifunctional enzyme with both catalase and broad-spectrum peroxidase activity. The polypeptide is Catalase-peroxidase (Pseudothermotoga lettingae (strain ATCC BAA-301 / DSM 14385 / NBRC 107922 / TMO) (Thermotoga lettingae)).